We begin with the raw amino-acid sequence, 452 residues long: Bifunctional protein GlmU (452 aa).

The pyrophosphorylase stretch occupies residues 1-225 (MDVVILAAGL…ENELIGINTR (225 aa)). Residues 6-9 (LAAG), Lys-20, Gln-71, and 76-77 (GT) contribute to the UDP-N-acetyl-alpha-D-glucosamine site. Asp-99 contributes to the Mg(2+) binding site. Gly-136, Glu-151, Asn-166, and Asn-223 together coordinate UDP-N-acetyl-alpha-D-glucosamine. Residue Asn-223 participates in Mg(2+) binding. The linker stretch occupies residues 226–246 (AELSLAMRYLRDRIVKGWMEK). Positions 247-452 (GITFYDPALV…LGWAKKKRKQ (206 aa)) are N-acetyltransferase. Residues Arg-329 and Lys-347 each coordinate UDP-N-acetyl-alpha-D-glucosamine. His-359 acts as the Proton acceptor in catalysis. Tyr-362 and Asn-373 together coordinate UDP-N-acetyl-alpha-D-glucosamine. Acetyl-CoA-binding positions include Ala-376, 382 to 383 (NY), Ser-401, Ala-419, and Arg-436.

In the N-terminal section; belongs to the N-acetylglucosamine-1-phosphate uridyltransferase family. The protein in the C-terminal section; belongs to the transferase hexapeptide repeat family. In terms of assembly, homotrimer. Mg(2+) serves as cofactor.

It localises to the cytoplasm. It carries out the reaction alpha-D-glucosamine 1-phosphate + acetyl-CoA = N-acetyl-alpha-D-glucosamine 1-phosphate + CoA + H(+). It catalyses the reaction N-acetyl-alpha-D-glucosamine 1-phosphate + UTP + H(+) = UDP-N-acetyl-alpha-D-glucosamine + diphosphate. The protein operates within nucleotide-sugar biosynthesis; UDP-N-acetyl-alpha-D-glucosamine biosynthesis; N-acetyl-alpha-D-glucosamine 1-phosphate from alpha-D-glucosamine 6-phosphate (route II): step 2/2. It functions in the pathway nucleotide-sugar biosynthesis; UDP-N-acetyl-alpha-D-glucosamine biosynthesis; UDP-N-acetyl-alpha-D-glucosamine from N-acetyl-alpha-D-glucosamine 1-phosphate: step 1/1. It participates in bacterial outer membrane biogenesis; LPS lipid A biosynthesis. Its function is as follows. Catalyzes the last two sequential reactions in the de novo biosynthetic pathway for UDP-N-acetylglucosamine (UDP-GlcNAc). The C-terminal domain catalyzes the transfer of acetyl group from acetyl coenzyme A to glucosamine-1-phosphate (GlcN-1-P) to produce N-acetylglucosamine-1-phosphate (GlcNAc-1-P), which is converted into UDP-GlcNAc by the transfer of uridine 5-monophosphate (from uridine 5-triphosphate), a reaction catalyzed by the N-terminal domain. In Thermodesulfovibrio yellowstonii (strain ATCC 51303 / DSM 11347 / YP87), this protein is Bifunctional protein GlmU.